A 114-amino-acid polypeptide reads, in one-letter code: UPF0342 protein PEPE_0673 (114 aa).

It belongs to the UPF0342 family.

The chain is UPF0342 protein PEPE_0673 from Pediococcus pentosaceus (strain ATCC 25745 / CCUG 21536 / LMG 10740 / 183-1w).